A 1639-amino-acid chain; its full sequence is RIMS-binding protein 3B (1639 aa).

3 disordered regions span residues methionine 1–alanine 22, glycine 215–proline 240, and serine 295–serine 364. Positions proline 21–leucine 143 form a coiled coil. Over residues serine 326–serine 339 the composition is skewed to pro residues. Coiled-coil stretches lie at residues glutamine 409 to asparagine 442 and leucine 480 to asparagine 619. Residues cysteine 697–aspartate 811 form a disordered region. 2 stretches are compositionally biased toward polar residues: residues tryptophan 707–lysine 718 and serine 761–leucine 775. Over residues serine 776–serine 790 the composition is skewed to low complexity. Residues proline 832–aspartate 899 enclose the SH3 1 domain. Fibronectin type-III domains are found at residues alanine 995–alanine 1083 and proline 1088–aspartate 1184. 3 disordered regions span residues proline 1251 to serine 1273, glutamine 1292 to proline 1325, and glycine 1392 to glycine 1413. Residues lysine 1293–aspartate 1305 are compositionally biased toward polar residues. A compositionally biased stretch (basic and acidic residues) spans glycine 1392–serine 1406. SH3 domains follow at residues threonine 1452–valine 1520 and tryptophan 1569–leucine 1636.

This sequence belongs to the RIMBP family. In terms of assembly, interacts with LRGUK (via guanylate kinase-like domain). Interacts (via C-terminus) with HOOK1 (via coiled-coil region).

The protein resides in the cytoplasm. Its subcellular location is the cytoskeleton. Probable component of the manchette, a microtubule-based structure which plays a key role in sperm head morphogenesis during late stages of sperm development. This is RIMS-binding protein 3B (RIMBP3B) from Homo sapiens (Human).